Consider the following 230-residue polypeptide: Large ribosomal subunit protein uL3 (230 aa).

Disordered regions lie at residues 125–149 and 210–230; these read QAIG…SLGD and PNPK…VKNE.

Belongs to the universal ribosomal protein uL3 family. As to quaternary structure, part of the 50S ribosomal subunit. Forms a cluster with proteins L14 and L19.

One of the primary rRNA binding proteins, it binds directly near the 3'-end of the 23S rRNA, where it nucleates assembly of the 50S subunit. This chain is Large ribosomal subunit protein uL3, found in Mesomycoplasma hyopneumoniae (strain J / ATCC 25934 / NCTC 10110) (Mycoplasma hyopneumoniae).